The following is a 908-amino-acid chain: DNA mismatch repair protein MutS (908 aa).

ATP is bound at residue 662-669; sequence GPNMGGKS.

This sequence belongs to the DNA mismatch repair MutS family.

In terms of biological role, this protein is involved in the repair of mismatches in DNA. It is possible that it carries out the mismatch recognition step. This protein has a weak ATPase activity. The chain is DNA mismatch repair protein MutS from Rhizobium johnstonii (strain DSM 114642 / LMG 32736 / 3841) (Rhizobium leguminosarum bv. viciae).